Consider the following 215-residue polypeptide: High mobility group protein B1 (215 aa).

Residues 9 to 79 (PRGKMSSYAF…RYEKEMKNYV (71 aa)) constitute a DNA-binding region (HMG box 1). Cysteine sulfonic acid (-SO3H); alternate is present on cysteine 23. Cysteine 23 and cysteine 45 are disulfide-bonded. Residues 27–43 (HKKKHPDASVNFSEFSK) form an NLS 1 region. The short motif at 27-43 (HKKKHPDASVNFSEFSK) is the Nuclear localization signal (NLS) 1 element. Residue cysteine 45 is modified to Cysteine sulfonic acid (-SO3H); alternate. Residues 75–95 (MKNYVPPKGETKKKFKDPNAP) are disordered. Residues 83–94 (GETKKKFKDPNA) are compositionally biased toward basic and acidic residues. The segment at residues 95–163 (PKRPPSAFFL…KYEKDIAAYR (69 aa)) is a DNA-binding region (HMG box 2). Cysteine 106 is modified (cysteine sulfonic acid (-SO3H)). Positions 166-179 (GKVDAGKKVVAKAE) are enriched in basic and acidic residues. Positions 166–215 (GKVDAGKKVVAKAEKSKKKKEEEEDEDEDEEDEEDEEEEEEEEEDDDDDE) are disordered. Residues 178 to 184 (AEKSKKK) form an NLS 2 region. Positions 178-184 (AEKSKKK) match the Nuclear localization signal (NLS) 2 motif. Positions 187-215 (EEEDEDEDEEDEEDEEEEEEEEEDDDDDE) are enriched in acidic residues. An involved in intramolecular interaction with K-3 region spans residues 196 to 210 (EDEEDEEEEEEEEED). An involved in interaction with histone H3 region spans residues 211 to 215 (DDDDE).

Belongs to the HMGB family. Reduction/oxidation of cysteine residues Cys-23, Cys-45 and Cys-106 and a possible intramolecular disulfide bond involving Cys-23 and Cys-45 give rise to different redox forms with specific functional activities: 1- fully reduced HMGB1 (HMGB1C23hC45hC106h), 2- disulfide HMGB1 (HMGB1C23-C45C106h) and 3- sulfonyl HMGB1 (HMGB1C23soC45soC106so).

It localises to the nucleus. The protein localises to the chromosome. Its subcellular location is the cytoplasm. The protein resides in the secreted. Its function is as follows. Multifunctional redox sensitive protein with various roles in different cellular compartments. Nuclear functions are attributed to fully reduced HGMB1. Associates with chromatin and binds DNA with a preference to non-canonical DNA structures such as single-stranded DNA, DNA-containing cruciforms or bent structures, supercoiled DNA and ZDNA. Can bent DNA and enhance DNA flexibility by looping thus providing a mechanism to promote activities on various gene promoters. Can restructure the canonical nucleosome. Proposed to be an universal biosensor for nucleic acids. May promote inflammatory response to sterile and infectious signals and may be involved in the coordination and integration of innate and adaptive immune responses. In the cytoplasm may function as sensor and/or chaperone for immunogenic nucleic acids, and mediate autophagy. May act as danger associated molecular pattern (DAMP) molecule that amplifies immune responses during tissue injury. In Gallus gallus (Chicken), this protein is High mobility group protein B1 (HMGB1).